The chain runs to 304 residues: Probable aquaporin NIP5-1 (304 aa).

Helical transmembrane passes span 80-100 and 106-126; these read LGAEFVGTFILIFTATAGPIV and GAETLIGNAACAGLAVMIIIL. The NPA 1 signature appears at 137 to 139; sequence NPS. The next 3 helical transmembrane spans lie at 157 to 177, 195 to 215, and 219 to 239; these read AYIAAQVSASICASFALKGVF, AFALEFIITFILLFVVTAVAT, and AVGELAGIAVGATVMLNILVA. The short motif at 248–250 is the NPA 2 element; sequence NPV. A helical transmembrane segment spans residues 266-286; it reads WVYLVAPTLGAISGAAVYTGV. Ser-301 carries the phosphoserine modification.

It belongs to the MIP/aquaporin (TC 1.A.8) family. NIP (TC 1.A.8.12) subfamily. As to expression, expressed in rosette leaves.

It localises to the cell membrane. Its function is as follows. Boric acid transporter. Low water transport activity. Plays an important role as plasma membrane boric acid channel for the boron uptake required for plant growth and development under boron limitation. The protein is Probable aquaporin NIP5-1 (NIP5-1) of Arabidopsis thaliana (Mouse-ear cress).